Here is a 339-residue protein sequence, read N- to C-terminus: Ketol-acid reductoisomerase (NADP(+)) (339 aa).

Residues 1–182 enclose the KARI N-terminal Rossmann domain; the sequence is MPNRYYEKDG…GCLKAGVIDT (182 aa). Residues 25–28, serine 51, serine 53, and 83–86 contribute to the NADP(+) site; these read YGSQ and DHIQ. Residue histidine 108 is part of the active site. Residue glycine 134 coordinates NADP(+). A KARI C-terminal knotted domain is found at 183-328; that stretch reads NFREETESDL…RELREMMTFL (146 aa). 4 residues coordinate Mg(2+): aspartate 191, glutamate 195, glutamate 227, and glutamate 231. A substrate-binding site is contributed by serine 252.

It belongs to the ketol-acid reductoisomerase family. Requires Mg(2+) as cofactor.

The enzyme catalyses (2R)-2,3-dihydroxy-3-methylbutanoate + NADP(+) = (2S)-2-acetolactate + NADPH + H(+). The catalysed reaction is (2R,3R)-2,3-dihydroxy-3-methylpentanoate + NADP(+) = (S)-2-ethyl-2-hydroxy-3-oxobutanoate + NADPH + H(+). It functions in the pathway amino-acid biosynthesis; L-isoleucine biosynthesis; L-isoleucine from 2-oxobutanoate: step 2/4. The protein operates within amino-acid biosynthesis; L-valine biosynthesis; L-valine from pyruvate: step 2/4. In terms of biological role, involved in the biosynthesis of branched-chain amino acids (BCAA). Catalyzes an alkyl-migration followed by a ketol-acid reduction of (S)-2-acetolactate (S2AL) to yield (R)-2,3-dihydroxy-isovalerate. In the isomerase reaction, S2AL is rearranged via a Mg-dependent methyl migration to produce 3-hydroxy-3-methyl-2-ketobutyrate (HMKB). In the reductase reaction, this 2-ketoacid undergoes a metal-dependent reduction by NADPH to yield (R)-2,3-dihydroxy-isovalerate. The polypeptide is Ketol-acid reductoisomerase (NADP(+)) (Solibacter usitatus (strain Ellin6076)).